The sequence spans 156 residues: Small ribosomal subunit protein bS16 (156 aa).

Residues 85–120 are compositionally biased toward basic and acidic residues; that stretch reads GESGAEGTLKSKSEKEAFVAPERDSVILPEEPKQEE. The disordered stretch occupies residues 85–156; sequence GESGAEGTLK…APAEDAEKSE (72 aa). Positions 132–150 are enriched in acidic residues; sequence PAEEAAEAPAEEAAEAPAE.

It belongs to the bacterial ribosomal protein bS16 family.

This Micrococcus luteus (strain ATCC 4698 / DSM 20030 / JCM 1464 / CCM 169 / CCUG 5858 / IAM 1056 / NBRC 3333 / NCIMB 9278 / NCTC 2665 / VKM Ac-2230) (Micrococcus lysodeikticus) protein is Small ribosomal subunit protein bS16.